The primary structure comprises 507 residues: Tyrosine protein-kinase src-2 (507 aa).

Residues 1 to 10 show a composition bias toward basic and acidic residues; the sequence is MGSCIGKEDP. Positions 1–52 are disordered; it reads MGSCIGKEDPPPGATSPVHTSSTLGRESLPSHPRIPSIGPIAASSSGNTIDK. The N-myristoyl glycine moiety is linked to residue G2. Residues 35-47 are compositionally biased toward low complexity; sequence IPSIGPIAASSSG. Positions 57-118 constitute an SH3 domain; it reads SQSANFVALF…PSNYVAREKS (62 aa). The SH2 domain maps to 124–216; sequence WYFGKMRRID…GLCVNLGAPC (93 aa). The Protein kinase domain occupies 240–494; it reads VRLIRQIGAG…LQWKLEDLFN (255 aa). Residues 246–254 and K268 each bind ATP; that span reads IGAGQFGEV. D358 acts as the Proton acceptor in catalysis. Y500 is modified (phosphotyrosine).

The protein belongs to the protein kinase superfamily. Tyr protein kinase family. SRC subfamily. It depends on Mg(2+) as a cofactor. Mn(2+) is required as a cofactor. May be phosphorylated on Tyr-500 by csk-1. Expressed in vulva, cells around anus and pharyngeal muscles.

The enzyme catalyses L-tyrosyl-[protein] + ATP = O-phospho-L-tyrosyl-[protein] + ADP + H(+). Its activity is regulated as follows. May be inhibited by csk-1-mediated phosphorylation at Tyr-500. Its function is as follows. Non-receptor tyrosine-protein kinase which may play a role in larval and pharynx development. Unlike src-1, does not play a role in embryonic development. This is Tyrosine protein-kinase src-2 from Caenorhabditis elegans.